The sequence spans 423 residues: Sulfate adenylyltransferase (423 aa).

It belongs to the sulfate adenylyltransferase family.

It carries out the reaction sulfate + ATP + H(+) = adenosine 5'-phosphosulfate + diphosphate. The protein operates within sulfur metabolism; hydrogen sulfide biosynthesis; sulfite from sulfate: step 1/3. This is Sulfate adenylyltransferase from Desulfovibrio desulfuricans (strain ATCC 27774 / DSM 6949 / MB).